Consider the following 138-residue polypeptide: ATP synthase epsilon chain (138 aa).

This sequence belongs to the ATPase epsilon chain family. F-type ATPases have 2 components, CF(1) - the catalytic core - and CF(0) - the membrane proton channel. CF(1) has five subunits: alpha(3), beta(3), gamma(1), delta(1), epsilon(1). CF(0) has three main subunits: a, b and c.

The protein localises to the cell inner membrane. Functionally, produces ATP from ADP in the presence of a proton gradient across the membrane. This chain is ATP synthase epsilon chain, found in Trichlorobacter lovleyi (strain ATCC BAA-1151 / DSM 17278 / SZ) (Geobacter lovleyi).